Here is an 84-residue protein sequence, read N- to C-terminus: uncharacterized protein (84 aa).

The next 3 membrane-spanning stretches (helical) occupy residues 8-28 (IYFFTIACIIAVIYCVLVNLL), 30-50 (INVIPVVLAFSLILILTISTI), and 63-83 (VLFMLLVLAFFAYAIYKLYIP).

It localises to the cell membrane. This is an uncharacterized protein from Methanocaldococcus jannaschii (strain ATCC 43067 / DSM 2661 / JAL-1 / JCM 10045 / NBRC 100440) (Methanococcus jannaschii).